Consider the following 373-residue polypeptide: XK-related protein 9 (373 aa).

8 helical membrane passes run 8–28 (FMMSVLGIIIYVTDLIVDIWV), 38–58 (YVFSALALSFMLFGTLVAQCF), 166–186 (AAIMVSCCAISWSTVDYQVAL), 203–223 (ITYLFYKLFTLLSWMLSVVLL), 224–244 (LFLNVKIALFLLLFLWLLGII), 256–276 (CISMEFLYRIVVGFILIFTFF), 295–315 (VLGTLGILTVFWVCPLTIFNP), and 318–338 (FIPISITIVLTLLLGILFLIV).

This sequence belongs to the XK family. Post-translationally, undergoes proteolytic processing by caspase-3 (CASP3), caspase-6 (CASP6) and caspase-7 (CASP7) to generate the XK-related protein 9, processed form, leading to its activation.

Its subcellular location is the cell membrane. The catalysed reaction is a 1,2-diacyl-sn-glycero-3-phospho-L-serine(in) = a 1,2-diacyl-sn-glycero-3-phospho-L-serine(out). Its activity is regulated as follows. Activated upon caspase cleavage to generate the XK-related protein 9, processed form. Does not act prior the onset of apoptosis. Phospholipid scramblase that promotes phosphatidylserine exposure on apoptotic cell surface. Phosphatidylserine is a specific marker only present at the surface of apoptotic cells and acts as a specific signal for engulfment. In Homo sapiens (Human), this protein is XK-related protein 9.